Consider the following 215-residue polypeptide: Small ribosomal subunit protein eS1 (215 aa).

The protein belongs to the eukaryotic ribosomal protein eS1 family.

The sequence is that of Small ribosomal subunit protein eS1 from Thermoplasma volcanium (strain ATCC 51530 / DSM 4299 / JCM 9571 / NBRC 15438 / GSS1).